A 222-amino-acid chain; its full sequence is Bone marrow proteoglycan (222 aa).

The N-terminal stretch at 1 to 16 (MKLPLLLALLFGAVSA) is a signal peptide. The propeptide at 17 to 105 (LHLRSETSTF…VKVVGIPGCQ (89 aa)) is acidic. The O-linked (GalNAc...) threonine; partial glycan is linked to Thr-23. Residue Ser-24 is glycosylated (O-linked (GalNAc...) serine). Thr-25 carries an O-linked (GalNAc...) threonine glycan. The interval 25–75 (TFETPLGAKTLPEDEETPEQEMEETPCRELEEEEEWGSGSEDASKKDGAVE) is disordered. An O-linked (GalNAc...) threonine; partial glycan is attached at Thr-34. The segment covering 37–60 (EDEETPEQEMEETPCRELEEEEEW) has biased composition (acidic residues). The O-linked (Xyl...) (chondroitin sulfate) serine glycan is linked to Ser-62. A glycan (N-linked (GlcNAc...) asparagine) is linked at Asn-86. Positions 104–222 (CQTCRYLLVR…LRRLPFICSY (119 aa)) constitute a C-type lectin domain. 2 disulfides stabilise this stretch: Cys-125–Cys-220 and Cys-197–Cys-212.

In terms of assembly, in pregnancy serum, the proform exists as a disulfide-linked 2:2 heterotetramer with PAPPA, as a disulfide-linked 2:2 heterotetramer with AGT, and as a complex (probably a 2:2:2 heterohexamer) with AGT and C3dg. In terms of processing, nitrated. Detected in plasma and urine (at protein level). Detected in placenta (at protein level). High levels of the proform in placenta and pregnancy serum; in placenta, localized to X cells of septa and anchoring villi. Lower levels in a variety of other tissues including kidney, myometrium, endometrium, ovaries, breast, prostate, bone marrow and colon.

The protein localises to the secreted. It is found in the cytoplasmic vesicle. It localises to the secretory vesicle. Functionally, cytotoxin and helminthotoxin. Also induces non-cytolytic histamine release from human basophils. Involved in antiparasitic defense mechanisms and immune hypersensitivity reactions. The proform acts as a proteinase inhibitor, reducing the activity of PAPPA. This Homo sapiens (Human) protein is Bone marrow proteoglycan (PRG2).